A 139-amino-acid polypeptide reads, in one-letter code: Nuclear receptor 2C2-associated protein (139 aa).

This sequence belongs to the NR2C2AP family. Interacts with NR2C2/TR4. In terms of tissue distribution, expressed in all tissues examined, with highest expression in heart, skeletal muscle and pancreas.

It is found in the nucleus. Functionally, may act as a repressor of NR2C2-mediated transactivation by suppressing the binding between NR2C2/TR4 and the TR4-response element in target genes. The polypeptide is Nuclear receptor 2C2-associated protein (NR2C2AP) (Homo sapiens (Human)).